The sequence spans 467 residues: ATP synthase subunit beta (467 aa).

An ATP-binding site is contributed by 150–157; that stretch reads GGAGVGKT.

The protein belongs to the ATPase alpha/beta chains family. F-type ATPases have 2 components, CF(1) - the catalytic core - and CF(0) - the membrane proton channel. CF(1) has five subunits: alpha(3), beta(3), gamma(1), delta(1), epsilon(1). CF(0) has three main subunits: a(1), b(2) and c(9-12). The alpha and beta chains form an alternating ring which encloses part of the gamma chain. CF(1) is attached to CF(0) by a central stalk formed by the gamma and epsilon chains, while a peripheral stalk is formed by the delta and b chains.

It is found in the cell inner membrane. It carries out the reaction ATP + H2O + 4 H(+)(in) = ADP + phosphate + 5 H(+)(out). Its function is as follows. Produces ATP from ADP in the presence of a proton gradient across the membrane. The catalytic sites are hosted primarily by the beta subunits. The chain is ATP synthase subunit beta from Vibrio vulnificus (strain YJ016).